A 588-amino-acid polypeptide reads, in one-letter code: Ribonuclease Y (588 aa).

A helical membrane pass occupies residues 7 to 27; that stretch reads VLLVAVLLLTVVVVGAVLVGV. In terms of domain architecture, KH spans 278–359; the sequence is VVSVLHLPGD…HRIEEVHDLA (82 aa). An HD domain is found at 404-497; sequence VLKHLVESAH…TQASDACSGG (94 aa).

This sequence belongs to the RNase Y family.

The protein localises to the cell membrane. In terms of biological role, endoribonuclease that initiates mRNA decay. The polypeptide is Ribonuclease Y (Salinispora tropica (strain ATCC BAA-916 / DSM 44818 / JCM 13857 / NBRC 105044 / CNB-440)).